We begin with the raw amino-acid sequence, 232 residues long: Ubiquinone biosynthesis O-methyltransferase (232 aa).

The S-adenosyl-L-methionine site is built by Arg-36, Gly-55, Asp-76, and Leu-120.

It belongs to the methyltransferase superfamily. UbiG/COQ3 family.

It catalyses the reaction a 3-demethylubiquinol + S-adenosyl-L-methionine = a ubiquinol + S-adenosyl-L-homocysteine + H(+). The enzyme catalyses a 3-(all-trans-polyprenyl)benzene-1,2-diol + S-adenosyl-L-methionine = a 2-methoxy-6-(all-trans-polyprenyl)phenol + S-adenosyl-L-homocysteine + H(+). The protein operates within cofactor biosynthesis; ubiquinone biosynthesis. Functionally, O-methyltransferase that catalyzes the 2 O-methylation steps in the ubiquinone biosynthetic pathway. The sequence is that of Ubiquinone biosynthesis O-methyltransferase from Pseudomonas syringae pv. tomato (strain ATCC BAA-871 / DC3000).